The following is a 401-amino-acid chain: S-adenosylmethionine synthase (401 aa).

Residue 135–140 (GHGSGD) participates in ATP binding.

This sequence belongs to the AdoMet synthase 2 family. Requires Mg(2+) as cofactor.

The enzyme catalyses L-methionine + ATP + H2O = S-adenosyl-L-methionine + phosphate + diphosphate. The protein operates within amino-acid biosynthesis; S-adenosyl-L-methionine biosynthesis; S-adenosyl-L-methionine from L-methionine: step 1/1. Catalyzes the formation of S-adenosylmethionine from methionine and ATP. This chain is S-adenosylmethionine synthase, found in Methanobrevibacter smithii (strain ATCC 35061 / DSM 861 / OCM 144 / PS).